A 105-amino-acid polypeptide reads, in one-letter code: Large ribosomal subunit protein uL24 (105 aa).

The protein belongs to the universal ribosomal protein uL24 family. As to quaternary structure, part of the 50S ribosomal subunit.

In terms of biological role, one of two assembly initiator proteins, it binds directly to the 5'-end of the 23S rRNA, where it nucleates assembly of the 50S subunit. One of the proteins that surrounds the polypeptide exit tunnel on the outside of the subunit. The polypeptide is Large ribosomal subunit protein uL24 (Cellvibrio japonicus (strain Ueda107) (Pseudomonas fluorescens subsp. cellulosa)).